Here is a 244-residue protein sequence, read N- to C-terminus: 7-cyano-7-deazaguanine synthase (244 aa).

14 to 24 (FSGGQDSATCV) lines the ATP pocket. 4 residues coordinate Zn(2+): cysteine 202, cysteine 217, cysteine 220, and cysteine 223.

This sequence belongs to the QueC family. Zn(2+) is required as a cofactor.

It catalyses the reaction 7-carboxy-7-deazaguanine + NH4(+) + ATP = 7-cyano-7-deazaguanine + ADP + phosphate + H2O + H(+). It participates in purine metabolism; 7-cyano-7-deazaguanine biosynthesis. Catalyzes the ATP-dependent conversion of 7-carboxy-7-deazaguanine (CDG) to 7-cyano-7-deazaguanine (preQ(0)). This Burkholderia cenocepacia (strain HI2424) protein is 7-cyano-7-deazaguanine synthase.